The sequence spans 178 residues: MNKKTQALIEQYSKSLVEVAIEHKIVEKIQQEVAALIDIFETSELEGVLSSLAVSHDEKQHFVKTLQTSCSTYLVNFLEVIVQNEREALLYPILKSVDQELIKVNGQYPIQITTAVALSPEQKERLFDIAKTKLALPNGQLVEHIDPSIVGGFVVNANNKVIDASVRNQLHQFKMKLK.

The protein belongs to the ATPase delta chain family. As to quaternary structure, F-type ATPases have 2 components, F(1) - the catalytic core - and F(0) - the membrane proton channel. F(1) has five subunits: alpha(3), beta(3), gamma(1), delta(1), epsilon(1). F(0) has three main subunits: a(1), b(2) and c(10-14). The alpha and beta chains form an alternating ring which encloses part of the gamma chain. F(1) is attached to F(0) by a central stalk formed by the gamma and epsilon chains, while a peripheral stalk is formed by the delta and b chains.

The protein localises to the cell membrane. Functionally, f(1)F(0) ATP synthase produces ATP from ADP in the presence of a proton or sodium gradient. F-type ATPases consist of two structural domains, F(1) containing the extramembraneous catalytic core and F(0) containing the membrane proton channel, linked together by a central stalk and a peripheral stalk. During catalysis, ATP synthesis in the catalytic domain of F(1) is coupled via a rotary mechanism of the central stalk subunits to proton translocation. In terms of biological role, this protein is part of the stalk that links CF(0) to CF(1). It either transmits conformational changes from CF(0) to CF(1) or is implicated in proton conduction. The sequence is that of ATP synthase subunit delta from Streptococcus agalactiae serotype V (strain ATCC BAA-611 / 2603 V/R).